A 196-amino-acid polypeptide reads, in one-letter code: ECF RNA polymerase sigma factor SigM (196 aa).

The segment at 39–105 (LFRRHHRQLH…ACLDRLRRAK (67 aa)) is sigma-70 factor domain-2. The Interaction with polymerase core subunit RpoC signature appears at 63–66 (DALQ). A sigma-70 factor domain-4 region spans residues 130–181 (AVQRALMRLPVEQRAAVVAVDMQGYSIADTARMLGVAEGTVKSRCARARARL). Positions 156 to 175 (IADTARMLGVAEGTVKSRCA) form a DNA-binding region, H-T-H motif.

It belongs to the sigma-70 factor family. ECF subfamily. As to quaternary structure, interacts transiently with the RNA polymerase catalytic core formed by RpoA, RpoB, RpoC and RpoZ (2 alpha, 1 beta, 1 beta' and 1 omega subunit) to form the RNA polymerase holoenzyme that can initiate transcription. Interacts (via sigma-70 factor domain 4) with anti-sigma-M factor RsmA.

Functionally, sigma factors are initiation factors that promote the attachment of RNA polymerase to specific initiation sites and are then released. Extracytoplasmic function (ECF) sigma factors are held in an inactive form by an anti-sigma factor until released by regulated intramembrane proteolysis. The sequence is that of ECF RNA polymerase sigma factor SigM (sigM) from Mycobacterium tuberculosis (strain ATCC 35801 / TMC 107 / Erdman).